The primary structure comprises 356 residues: Xylose/arabinose import permease protein XylH (356 aa).

Helical transmembrane passes span 14-34, 41-61, 70-90, 96-116, 126-146, 161-181, 211-231, 242-262, 266-286, and 287-307; these read LFLV…AYFS, IFQY…LMLC, ALAN…YQAI, IVVS…MNGL, LITT…YSGG, VSIL…LILL, VKII…IIQG, FTAD…TSLV, GSLV…NGFN, and ILGI…VVVM.

Belongs to the binding-protein-dependent transport system permease family. As to quaternary structure, the complex is composed of two ATP-binding proteins (XylG), two transmembrane proteins (XylH) and a solute-binding protein (XylF).

It is found in the cell membrane. Functionally, part of the ABC transporter complex XylFGH involved in the uptake of xylose and arabinose. Responsible for the translocation of the substrate across the membrane. The chain is Xylose/arabinose import permease protein XylH from Sulfolobus acidocaldarius (strain ATCC 33909 / DSM 639 / JCM 8929 / NBRC 15157 / NCIMB 11770).